Here is a 203-residue protein sequence, read N- to C-terminus: Holliday junction branch migration complex subunit RuvA (203 aa).

The interval 1-63 is domain I; it reads MIGQLSGKVD…EEHIHLYGFL (63 aa). The tract at residues 64–142 is domain II; the sequence is NLEEKIFFNL…KISSGSAIIK (79 aa). Residues 143 to 149 form a flexible linker region; it reads ESLNIKH. A domain III region spans residues 150–203; sequence ITPVASNEVIKALVNLGFSRFEAQNAVQGIITQNPEISIDELIKTALKNRNSNF.

This sequence belongs to the RuvA family. Homotetramer. Forms an RuvA(8)-RuvB(12)-Holliday junction (HJ) complex. HJ DNA is sandwiched between 2 RuvA tetramers; dsDNA enters through RuvA and exits via RuvB. An RuvB hexamer assembles on each DNA strand where it exits the tetramer. Each RuvB hexamer is contacted by two RuvA subunits (via domain III) on 2 adjacent RuvB subunits; this complex drives branch migration. In the full resolvosome a probable DNA-RuvA(4)-RuvB(12)-RuvC(2) complex forms which resolves the HJ.

The protein resides in the cytoplasm. Its function is as follows. The RuvA-RuvB-RuvC complex processes Holliday junction (HJ) DNA during genetic recombination and DNA repair, while the RuvA-RuvB complex plays an important role in the rescue of blocked DNA replication forks via replication fork reversal (RFR). RuvA specifically binds to HJ cruciform DNA, conferring on it an open structure. The RuvB hexamer acts as an ATP-dependent pump, pulling dsDNA into and through the RuvAB complex. HJ branch migration allows RuvC to scan DNA until it finds its consensus sequence, where it cleaves and resolves the cruciform DNA. This chain is Holliday junction branch migration complex subunit RuvA, found in Rickettsia africae (strain ESF-5).